Reading from the N-terminus, the 277-residue chain is Probable endonuclease 4 (277 aa).

H70, H108, E143, D176, H179, H210, D223, H225, and E255 together coordinate Zn(2+).

Belongs to the AP endonuclease 2 family. It depends on Zn(2+) as a cofactor.

It catalyses the reaction Endonucleolytic cleavage to 5'-phosphooligonucleotide end-products.. Functionally, endonuclease IV plays a role in DNA repair. It cleaves phosphodiester bonds at apurinic or apyrimidinic (AP) sites, generating a 3'-hydroxyl group and a 5'-terminal sugar phosphate. This Mycoplasmopsis synoviae (strain 53) (Mycoplasma synoviae) protein is Probable endonuclease 4.